We begin with the raw amino-acid sequence, 132 residues long: Nickel-responsive regulator (132 aa).

Ni(2+) contacts are provided by H76, H87, H89, and C95.

The protein belongs to the transcriptional regulatory CopG/NikR family. Homotetramer. It depends on Ni(2+) as a cofactor.

In terms of biological role, transcriptional repressor of the nikABCDE operon. Is active in the presence of excessive concentrations of intracellular nickel. In Klebsiella pneumoniae (strain 342), this protein is Nickel-responsive regulator.